A 104-amino-acid chain; its full sequence is L-rhamnose mutarotase (104 aa).

Tyr18 is a substrate binding site. His22 serves as the catalytic Proton donor. Residues Tyr41 and 76–77 each bind substrate; that span reads WW.

The protein belongs to the rhamnose mutarotase family. As to quaternary structure, homodimer.

Its subcellular location is the cytoplasm. The enzyme catalyses alpha-L-rhamnose = beta-L-rhamnose. It functions in the pathway carbohydrate metabolism; L-rhamnose metabolism. Functionally, involved in the anomeric conversion of L-rhamnose. This chain is L-rhamnose mutarotase, found in Yersinia pseudotuberculosis serotype O:1b (strain IP 31758).